The chain runs to 351 residues: Polycomb group RING finger protein 6 (351 aa).

The segment at 1–114 is disordered; that stretch reads MEEAETDATE…FSLRLESGRA (114 aa). Positions 9–19 are enriched in basic and acidic residues; the sequence is TENKRASEAKR. The span at 24-37 shows a compositional bias: pro residues; sequence LPPPPPPISPPALI. At Ser-32 the chain carries Phosphoserine. Residues 38–51 are compositionally biased toward low complexity; sequence PAPAAGEEGPASLA. Over residues 62–80 the composition is skewed to basic and acidic residues; the sequence is RPPELEPERSLGRLRGRFE. A coiled-coil region spans residues 69–110; that stretch reads ERSLGRLRGRFEDYDEELEEDEEMEEEEEEEEEMSHFSLRLE. Residues 81–101 show a composition bias toward acidic residues; the sequence is DYDEELEEDEEMEEEEEEEEE. Ser-116 bears the Phosphoserine mark. The RING-type zinc-finger motif lies at 135–174; it reads CSICKGYLIDATTITECLHTFCKSCIVRHFYYSNRCPKCN. Residues Lys-224 and Lys-235 each participate in a glycyl lysine isopeptide (Lys-Gly) (interchain with G-Cter in SUMO2) cross-link.

Component of a PRC1-like complex. Interacts with BMI1/PCGF4, RING1 and RNF2. Interacts with KDM5D. Interacts with CBX4, CBX6, CBX7 and CBX8. Phosphorylated during mitosis.

Its subcellular location is the nucleus. In terms of biological role, transcriptional repressor. May modulate the levels of histone H3K4Me3 by activating KDM5D histone demethylase. Component of a Polycomb group (PcG) multiprotein PRC1-like complex, a complex class required to maintain the transcriptionally repressive state of many genes, including Hox genes, throughout development. PcG PRC1 complex acts via chromatin remodeling and modification of histones; it mediates monoubiquitination of histone H2A 'Lys-119', rendering chromatin heritably changed in its expressibility. Within the PRC1-like complex, regulates RNF2 ubiquitin ligase activity. The polypeptide is Polycomb group RING finger protein 6 (Pcgf6) (Rattus norvegicus (Rat)).